A 795-amino-acid polypeptide reads, in one-letter code: Probable diacylglycerol kinase 3 (795 aa).

EF-hand domains follow at residues 170–205 (TPEN…MMNV) and 215–250 (ELEQ…NIPL). Ca(2+) contacts are provided by D183, D185, N187, E194, D228, D230, D232, and E239. 2 Phorbol-ester/DAG-type zinc fingers span residues 265–316 (SHVW…ATNC) and 329–375 (YHHW…AQEC). Positions 423–558 (NDCRPLLVLV…MDRWQIKIEI (136 aa)) constitute a DAGKc domain.

The protein belongs to the eukaryotic diacylglycerol kinase family. As to quaternary structure, monomer.

It catalyses the reaction a 1,2-diacyl-sn-glycerol + ATP = a 1,2-diacyl-sn-glycero-3-phosphate + ADP + H(+). Functionally, involved in AFD-neuron mediated thermotaxis. Regulates behavior to environmental temperature. Thought to have a role in olfactory adaptation by affecting diacylglycerol levels. This is Probable diacylglycerol kinase 3 (dgk-3) from Caenorhabditis elegans.